We begin with the raw amino-acid sequence, 86 residues long: Putative pro-MCH-like protein 2 (86 aa).

Positions 31 to 49 (GSVAFPAENGVQDTESTLE) are NGE-like. The segment at 40 to 60 (GVQDTESTLEKRETGDEENSA) is disordered. Residues 52-64 (ETGDEENSAKFPI) form an NEI-like region. Positions 68–86 (DFDTLRCMLGRVYQRCWQV) are melanin-concentrating hormone-like.

It belongs to the melanin-concentrating hormone family. As to expression, expressed in testis but not in brain.

The chain is Putative pro-MCH-like protein 2 (PMCHL2) from Homo sapiens (Human).